The sequence spans 487 residues: MSVQFTATALARAVTAGETTPQALLDQAVARAEAASTLNALVSLNEQAGAQAAEVSRRLAGGEALPLAGVPVIVKDNINVSGTRTTCGSRILATYVSPYTATAAQRLIDAGAVIVGKANMDEFAMGSSTESSASGPTLNPWDLSRVPGGSSGGSAVAVAANLTPVSLGSDTGGSVRQPAALTGVYGLKPTYGRVSRYGLVAYASSLDQIGPFARSAADLALLMNVVAGHDPRDATSLEAPARFQAGAPEDLKGLRVGVIRESLGGNTSAVDAALNTTLEALRAGGATTGEVSIPDLSHAIAAYYLIAMPEASSNLARYDGMVYGQRAPGSDVSEVMTLTREHGFGREVQRRIMIGTYALSSGYYDAYYSKAMKVRRLIAQEFSRAFQEYDVLVTPTSPFPAFRRGEKTSDPLAMYAADVDTVAVNLAGLPAISIPAGFDLAEGGVRLPVGVQFIAPALKDELLVQLAGALEGIGAVQLDSPAGYAAP.

Residues K75 and S150 each act as charge relay system in the active site. S174 (acyl-ester intermediate) is an active-site residue.

It belongs to the amidase family. GatA subfamily. In terms of assembly, heterotrimer of A, B and C subunits.

It carries out the reaction L-glutamyl-tRNA(Gln) + L-glutamine + ATP + H2O = L-glutaminyl-tRNA(Gln) + L-glutamate + ADP + phosphate + H(+). In terms of biological role, allows the formation of correctly charged Gln-tRNA(Gln) through the transamidation of misacylated Glu-tRNA(Gln) in organisms which lack glutaminyl-tRNA synthetase. The reaction takes place in the presence of glutamine and ATP through an activated gamma-phospho-Glu-tRNA(Gln). This is Glutamyl-tRNA(Gln) amidotransferase subunit A from Deinococcus deserti (strain DSM 17065 / CIP 109153 / LMG 22923 / VCD115).